A 435-amino-acid polypeptide reads, in one-letter code: Methylenetetrahydrofolate--tRNA-(uracil-5-)-methyltransferase TrmFO (435 aa).

9-14 serves as a coordination point for FAD; sequence GAGLAG.

This sequence belongs to the MnmG family. TrmFO subfamily. It depends on FAD as a cofactor.

The protein localises to the cytoplasm. It carries out the reaction uridine(54) in tRNA + (6R)-5,10-methylene-5,6,7,8-tetrahydrofolate + NADH + H(+) = 5-methyluridine(54) in tRNA + (6S)-5,6,7,8-tetrahydrofolate + NAD(+). It catalyses the reaction uridine(54) in tRNA + (6R)-5,10-methylene-5,6,7,8-tetrahydrofolate + NADPH + H(+) = 5-methyluridine(54) in tRNA + (6S)-5,6,7,8-tetrahydrofolate + NADP(+). Catalyzes the folate-dependent formation of 5-methyl-uridine at position 54 (M-5-U54) in all tRNAs. The protein is Methylenetetrahydrofolate--tRNA-(uracil-5-)-methyltransferase TrmFO of Staphylococcus epidermidis (strain ATCC 35984 / DSM 28319 / BCRC 17069 / CCUG 31568 / BM 3577 / RP62A).